The following is a 110-amino-acid chain: uncharacterized protein (110 aa).

This is an uncharacterized protein from Human cytomegalovirus (strain AD169) (HHV-5).